Reading from the N-terminus, the 157-residue chain is Small ribosomal subunit protein uS7 (157 aa).

This sequence belongs to the universal ribosomal protein uS7 family. In terms of assembly, part of the 30S ribosomal subunit. Contacts proteins S9 and S11.

One of the primary rRNA binding proteins, it binds directly to 16S rRNA where it nucleates assembly of the head domain of the 30S subunit. Is located at the subunit interface close to the decoding center, probably blocks exit of the E-site tRNA. The sequence is that of Small ribosomal subunit protein uS7 from Francisella philomiragia subsp. philomiragia (strain ATCC 25017 / CCUG 19701 / FSC 153 / O#319-036).